The following is a 1040-amino-acid chain: Vacuolar membrane protease (1040 aa).

Residues 1–9 lie on the Cytoplasmic side of the membrane; it reads MINPISFRP. The chain crosses the membrane as a helical span at residues 10-30; the sequence is GPVTFWTTLIYLALLIPIVII. At 31 to 405 the chain is on the vacuolar side; sequence NEEPPAAPKT…SFVLFGLRGM (375 aa). N48, N117, N120, and N129 each carry an N-linked (GlcNAc...) asparagine glycan. H186 and D198 together coordinate Zn(2+). E232 (proton acceptor) is an active-site residue. Residues E233, E258, and H331 each coordinate Zn(2+). A helical membrane pass occupies residues 406–426; sequence FAWSLTLLIATPLILVGITWL. Residues 427-436 are Cytoplasmic-facing; it reads LRNLDKDYFF. Residues 437–456 traverse the membrane as a helical segment; the sequence is TSTVKTKEHPEYEAVPIGGW. The Vacuolar portion of the chain corresponds to 457–462; sequence KGFFRW. A helical transmembrane segment spans residues 463-483; that stretch reads AMMVSIFYFSFWMIMRGANFV. At 484-490 the chain is on the cytoplasmic side; it reads RPSALHR. A helical transmembrane segment spans residues 491–511; the sequence is GYANLWLFVFGWIVLVAVTAL. Topologically, residues 512–521 are vacuolar; the sequence is EDRRRIAAGY. A helical transmembrane segment spans residues 522-542; sequence IFVFLESAIFLSCLISFVELL. Residues 543 to 715 lie on the Cytoplasmic side of the membrane; the sequence is ALPRKSAYAL…YEHEQDWSGH (173 aa). The tract at residues 563-680 is disordered; it reads HSGYQGYRDS…NGTNDRGRTT (118 aa). Composition is skewed to low complexity over residues 577 to 594 and 616 to 626; these read SSGARAESSASAGSPSSP and APSVAAHSSQP. Residues 636–647 are compositionally biased toward polar residues; it reads GRSTSAPIPSTT. Over residues 650–661 the composition is skewed to acidic residues; sequence DEDESEDDDDEA. The chain crosses the membrane as a helical span at residues 716 to 736; sequence LPSWAWFFQFLLLGPFMIILA. Topologically, residues 737-758 are vacuolar; it reads AQTGLMLTDAVYQTGSDGSKLF. Residues 759-779 form a helical membrane-spanning segment; it reads TPYLMIFFFTLLLILPLTPFI. At 780–785 the chain is on the cytoplasmic side; the sequence is HRVTHH. A helical transmembrane segment spans residues 786 to 806; it reads IPVFLLVVFIVTLTYNLIAFP. Residues 807-1040 lie on the Vacuolar side of the membrane; the sequence is FSANNRYKAF…VEGRKAFKIV (234 aa). A glycan (N-linked (GlcNAc...) asparagine) is linked at N900.

It belongs to the peptidase M28 family. Requires Zn(2+) as cofactor.

The protein localises to the vacuole membrane. In terms of biological role, may be involved in vacuolar sorting and osmoregulation. In Sordaria macrospora (strain ATCC MYA-333 / DSM 997 / K(L3346) / K-hell), this protein is Vacuolar membrane protease.